Reading from the N-terminus, the 197-residue chain is Tyrosine-protein phosphatase-like protein OCA2 (197 aa).

One can recognise a Tyrosine-protein phosphatase domain in the interval 10–160 (SPVVSTDVSL…FETNLKIPRN (151 aa)). S181 bears the Phosphoserine mark.

Belongs to the protein-tyrosine phosphatase family.

The protein localises to the cytoplasm. Required for normal growth in the presence of linoleic acid hydroperoxide (LoaOOH). This is Tyrosine-protein phosphatase-like protein OCA2 (OCA2) from Saccharomyces cerevisiae (strain ATCC 204508 / S288c) (Baker's yeast).